Consider the following 207-residue polypeptide: Putative transcriptional regulator (207 aa).

The Response regulatory domain maps to 3 to 118 (KVLIVDDHPA…ELLLAAKAVL (116 aa)). 4-aspartylphosphate is present on residues D9 and D53. The HTH luxR-type domain maps to 140 to 205 (EARMLESLSD…GLIDFARRHE (66 aa)). Positions 155–174 (LQYLANGNTNKAIAQQLFLS) form a DNA-binding region, H-T-H motif.

Its function is as follows. Probable transcriptional regulator. The chain is Putative transcriptional regulator from Pseudomonas aeruginosa (strain ATCC 15692 / DSM 22644 / CIP 104116 / JCM 14847 / LMG 12228 / 1C / PRS 101 / PAO1).